A 772-amino-acid polypeptide reads, in one-letter code: Metal transporter CNNM4 (772 aa).

Residues methionine 1 to glycine 175 are Extracellular-facing. Asparagine 120 is a glycosylation site (N-linked (GlcNAc...) asparagine). The chain crosses the membrane as a helical span at residues arginine 176 to isoleucine 196. The region spanning arginine 176–glutamate 356 is the CNNM transmembrane domain. At phenylalanine 197–glycine 237 the chain is on the cytoplasmic side. The segment at residues asparagine 238–leucine 258 is an intramembrane region (helical). The Cytoplasmic portion of the chain corresponds to leucine 259–asparagine 261. Residues leucine 262–glutamate 282 traverse the membrane as a helical segment. Topologically, residues isoleucine 283 to serine 290 are extracellular. Residues arginine 291–proline 313 form a helical membrane-spanning segment. The Cytoplasmic portion of the chain corresponds to leucine 314–isoleucine 772. CBS domains lie at methionine 375–leucine 436 and tyrosine 443–glutamate 509. A disordered region spans residues proline 647–serine 676. A phosphoserine mark is found at serine 658, serine 662, and serine 767.

This sequence belongs to the ACDP family. As to quaternary structure, interacts with COX11. As to expression, present in spinal cord dorsal horn neurons and in developing teeth (at protein level). In the tooth, higher expression is found in the ameloblasts during the transition and maturation phases of amelogenesis; reduced expression in the odontoblasts.

The protein localises to the cell membrane. Functionally, probable metal transporter. The interaction with the metal ion chaperone COX11 suggests that it may play a role in sensory neuron functions. May play a role in biomineralization and retinal function. The polypeptide is Metal transporter CNNM4 (Cnnm4) (Rattus norvegicus (Rat)).